Here is a 127-residue protein sequence, read N- to C-terminus: Small ribosomal subunit protein uS13 (127 aa).

The interval His92–Lys127 is disordered. Basic residues predominate over residues Gln101–Lys127.

It belongs to the universal ribosomal protein uS13 family. Part of the 30S ribosomal subunit. Forms a loose heterodimer with protein S19. Forms two bridges to the 50S subunit in the 70S ribosome.

Functionally, located at the top of the head of the 30S subunit, it contacts several helices of the 16S rRNA. In the 70S ribosome it contacts the 23S rRNA (bridge B1a) and protein L5 of the 50S subunit (bridge B1b), connecting the 2 subunits; these bridges are implicated in subunit movement. Contacts the tRNAs in the A and P-sites. This is Small ribosomal subunit protein uS13 from Gloeothece citriformis (strain PCC 7424) (Cyanothece sp. (strain PCC 7424)).